The primary structure comprises 901 residues: Aconitate hydratase A (901 aa).

3 residues coordinate [4Fe-4S] cluster: Cys-443, Cys-509, and Cys-512.

Belongs to the aconitase/IPM isomerase family. As to quaternary structure, monomer. [4Fe-4S] cluster is required as a cofactor.

The enzyme catalyses citrate = D-threo-isocitrate. It carries out the reaction (2S,3R)-3-hydroxybutane-1,2,3-tricarboxylate = 2-methyl-cis-aconitate + H2O. Its pathway is carbohydrate metabolism; tricarboxylic acid cycle; isocitrate from oxaloacetate: step 2/2. It functions in the pathway organic acid metabolism; propanoate degradation. Functionally, involved in the catabolism of short chain fatty acids (SCFA) via the tricarboxylic acid (TCA)(acetyl degradation route) and probably the 2-methylcitrate cycle I (propionate degradation route). Catalyzes the reversible isomerization of citrate to isocitrate via cis-aconitate. Could catalyze the hydration of 2-methyl-cis-aconitate to yield (2R,3S)-2-methylisocitrate. The apo form of AcnA functions as a RNA-binding regulatory protein. This chain is Aconitate hydratase A (acnA), found in Staphylococcus epidermidis (strain ATCC 12228 / FDA PCI 1200).